The primary structure comprises 326 residues: HTH-type transcriptional regulator SyrM (326 aa).

Residues 32–89 (IDLNLLVDLEALLQYRHITQAAQHVGRSQPAMSRALSRLRGMLKDDLLVAGSRGLVLT) form the HTH lysR-type domain. Residues 49–68 (ITQAAQHVGRSQPAMSRALS) constitute a DNA-binding region (H-T-H motif).

Belongs to the LysR transcriptional regulatory family.

In terms of biological role, acts in trans to stimulate nod gene expression via nodD3 and exo gene expression via SyrA. In Rhizobium meliloti (strain 1021) (Ensifer meliloti), this protein is HTH-type transcriptional regulator SyrM (syrM).